The chain runs to 265 residues: Transcriptional activator TAF-1 (265 aa).

Disordered stretches follow at residues 1–133 (AHGG…SEKA) and 167–218 (THLK…KQAE). Residues 35-46 (ASLSLDASAKSS) are compositionally biased toward low complexity. Basic and acidic residues-rich tracts occupy residues 103–115 (RETT…DSKS) and 191–209 (NERE…ESAR). Positions 194–257 (ELKREKRKQS…EKLKLENAAL (64 aa)) constitute a bZIP domain. Residues 196 to 215 (KREKRKQSNRESARRSRLRK) are basic motif. Residues 222 to 257 (LAIRVQSLTAENMTLKSEINKLMENSEKLKLENAAL) are leucine-zipper.

It belongs to the bZIP family. In terms of tissue distribution, present mainly in roots. Barely detectable in stems and leaves.

The protein resides in the nucleus. In terms of biological role, trans-activator of a beta-glucuronidase (GUS) reporter gene. Binds to a G-box-related element, (5'-GCAACGTGGC-3'). Also binds to the HEX-motif of wheat histone H3 promoter. This chain is Transcriptional activator TAF-1 (TAF1), found in Nicotiana tabacum (Common tobacco).